A 508-amino-acid polypeptide reads, in one-letter code: Putative adenosylhomocysteinase 3 (508 aa).

Residue Ser4 is modified to Phosphoserine. The segment at 24 to 81 is disordered; sequence DQKQEFNKRPTKIGRRSLSRSISQSSTDSYSSAASYTDSSDDETSPRDKQQKNSKGSS. A compositionally biased stretch (basic residues) spans 32–41; sequence RPTKIGRRSL. Over residues 42-61 the composition is skewed to low complexity; it reads SRSISQSSTDSYSSAASYTD. Phosphoserine occurs at positions 46, 49, 52, and 55. Residues Thr133, Asp207, and Glu232 each contribute to the substrate site. An NAD(+)-binding site is contributed by 233–235; that stretch reads SVT. Residues Lys262 and Asp266 each coordinate substrate. NAD(+) contacts are provided by residues Asn267, 298–303, Glu319, Asn354, 375–377, and Asn422; these read GEVGKG and IGH.

This sequence belongs to the adenosylhomocysteinase family. Homotetramer. Forms heteromultimers with AHCYL1 (via the C-terminal region). Interacts with ITPR1; with lower affinity than AHCYL1 and maybe via ITPR1. Interacts with SLC4A4. Interacts with ZCCHC4. It depends on NAD(+) as a cofactor.

It is found in the cytoplasm. Its subcellular location is the microsome. It carries out the reaction S-adenosyl-L-homocysteine + H2O = L-homocysteine + adenosine. The protein operates within amino-acid biosynthesis; L-homocysteine biosynthesis; L-homocysteine from S-adenosyl-L-homocysteine: step 1/1. May regulate the electrogenic sodium/bicarbonate cotransporter SLC4A4 activity and Mg(2+)-sensitivity. On the contrary of its homolog AHCYL1, does not regulate ITPR1 sensitivity to inositol 1,4,5-trisphosphate. This Pongo abelii (Sumatran orangutan) protein is Putative adenosylhomocysteinase 3 (AHCYL2).